The sequence spans 163 residues: 2-C-methyl-D-erythritol 2,4-cyclodiphosphate synthase (163 aa).

A divalent metal cation is bound by residues aspartate 8 and histidine 10. Residues 8–10 (DVH) and 34–35 (HS) contribute to the 4-CDP-2-C-methyl-D-erythritol 2-phosphate site. Histidine 42 serves as a coordination point for a divalent metal cation. Residues 56–58 (DIG), 132–135 (TTTE), phenylalanine 139, and arginine 142 contribute to the 4-CDP-2-C-methyl-D-erythritol 2-phosphate site.

The protein belongs to the IspF family. Homotrimer. A divalent metal cation serves as cofactor.

The catalysed reaction is 4-CDP-2-C-methyl-D-erythritol 2-phosphate = 2-C-methyl-D-erythritol 2,4-cyclic diphosphate + CMP. Its pathway is isoprenoid biosynthesis; isopentenyl diphosphate biosynthesis via DXP pathway; isopentenyl diphosphate from 1-deoxy-D-xylulose 5-phosphate: step 4/6. Its function is as follows. Involved in the biosynthesis of isopentenyl diphosphate (IPP) and dimethylallyl diphosphate (DMAPP), two major building blocks of isoprenoid compounds. Catalyzes the conversion of 4-diphosphocytidyl-2-C-methyl-D-erythritol 2-phosphate (CDP-ME2P) to 2-C-methyl-D-erythritol 2,4-cyclodiphosphate (ME-CPP) with a corresponding release of cytidine 5-monophosphate (CMP). This Moorella thermoacetica (strain ATCC 39073 / JCM 9320) protein is 2-C-methyl-D-erythritol 2,4-cyclodiphosphate synthase.